Here is a 56-residue protein sequence, read N- to C-terminus: Large ribosomal subunit protein bL32A (56 aa).

Residues 1–56 form a disordered region; sequence MAVPARRTSKAKKNKRRTHKGLTAPGLSRDSETGEYRMSHRISPDGTYKGRTIIEK. Over residues 7–20 the composition is skewed to basic residues; it reads RTSKAKKNKRRTHK. The segment covering 29–38 has biased composition (basic and acidic residues); the sequence is RDSETGEYRM.

This sequence belongs to the bacterial ribosomal protein bL32 family.

The protein is Large ribosomal subunit protein bL32A (rpmF1) of Listeria innocua serovar 6a (strain ATCC BAA-680 / CLIP 11262).